Here is a 146-residue protein sequence, read N- to C-terminus: Hemoglobin subunit beta (146 aa).

At Val-1 the chain carries N-acetylvaline. Residues 2-146 (HLTADEKVSL…VANALAHKYH (145 aa)) form the Globin domain. A Phosphoserine modification is found at Ser-44. Residue Lys-59 is modified to N6-acetyllysine. Residue His-63 coordinates heme b. N6-acetyllysine is present on Lys-82. Residue His-92 participates in heme b binding. Cys-93 bears the S-nitrosocysteine mark. The residue at position 144 (Lys-144) is an N6-acetyllysine.

This sequence belongs to the globin family. In terms of assembly, heterotetramer of two alpha chains and two beta chains. As to expression, red blood cells.

Involved in oxygen transport from the lung to the various peripheral tissues. In Tamias striatus (Eastern chipmunk), this protein is Hemoglobin subunit beta.